The chain runs to 765 residues: uncharacterized protein (765 aa).

This is an uncharacterized protein from Methanocaldococcus jannaschii (strain ATCC 43067 / DSM 2661 / JAL-1 / JCM 10045 / NBRC 100440) (Methanococcus jannaschii).